The following is a 275-amino-acid chain: Large ribosomal subunit protein uL2 (275 aa).

Disordered regions lie at residues 222-243 (GSVM…PIGR) and 256-275 (GGKT…KRKP).

This sequence belongs to the universal ribosomal protein uL2 family. As to quaternary structure, part of the 50S ribosomal subunit. Forms a bridge to the 30S subunit in the 70S ribosome.

One of the primary rRNA binding proteins. Required for association of the 30S and 50S subunits to form the 70S ribosome, for tRNA binding and peptide bond formation. It has been suggested to have peptidyltransferase activity; this is somewhat controversial. Makes several contacts with the 16S rRNA in the 70S ribosome. This chain is Large ribosomal subunit protein uL2, found in Syntrophomonas wolfei subsp. wolfei (strain DSM 2245B / Goettingen).